The following is a 149-amino-acid chain: Transcription factor bHLH153 (149 aa).

The bHLH domain occupies 27 to 76 (RHKSDLSFSSKERKDKVGERISALQQIVSPYGKTDTASVLLDAMHYIEFL).

It belongs to the bHLH protein family.

The protein resides in the nucleus. The sequence is that of Transcription factor bHLH153 from Arabidopsis thaliana (Mouse-ear cress).